The chain runs to 142 residues: Large ribosomal subunit protein uL13 (142 aa).

This sequence belongs to the universal ribosomal protein uL13 family. In terms of assembly, part of the 50S ribosomal subunit.

Functionally, this protein is one of the early assembly proteins of the 50S ribosomal subunit, although it is not seen to bind rRNA by itself. It is important during the early stages of 50S assembly. This is Large ribosomal subunit protein uL13 from Saccharophagus degradans (strain 2-40 / ATCC 43961 / DSM 17024).